A 116-amino-acid polypeptide reads, in one-letter code: MLRARNRMRRSADFETTVKHGMRTVRSDMVVYWWRGSGGGPRVGLIIAKSVGSAVERHRVARRLRHVAGSIVKELHPSDHVVIRALPSSRHVSSARLEQQLRCGLRRAVELAGSDR.

It belongs to the RnpA family. As to quaternary structure, consists of a catalytic RNA component (M1 or rnpB) and a protein subunit.

It carries out the reaction Endonucleolytic cleavage of RNA, removing 5'-extranucleotides from tRNA precursor.. In terms of biological role, RNaseP catalyzes the removal of the 5'-leader sequence from pre-tRNA to produce the mature 5'-terminus. It can also cleave other RNA substrates such as 4.5S RNA. The protein component plays an auxiliary but essential role in vivo by binding to the 5'-leader sequence and broadening the substrate specificity of the ribozyme. The protein is Ribonuclease P protein component of Mycobacterium bovis (strain ATCC BAA-935 / AF2122/97).